We begin with the raw amino-acid sequence, 94 residues long: Defensin alpha 5 (94 aa).

An N-terminal signal peptide occupies residues 1-19; it reads MRTIAILAAILLVALQAQA. Disulfide bonds link C65–C93, C67–C82, and C72–C92.

This sequence belongs to the alpha-defensin family. In terms of assembly, homodimer. Homotetramer. Interacts with B.antracis lef/lethal factor. Glycosylated. In terms of processing, proteolytically cleaved at Arg-62 by trypsin. Both the propeptide form proHD5/HD5(20-94) and HD5(56-94) are cleaved into the lumenal peptide form HD5(63-94) by trypsin. Unprocessed proHD5 exerts antimicrobial activities, but peptide potency is enhanced by peptide processing. Proteolytically cleaved in duodenal fluid; derived fragments are antimicrobially active against commensal bacteria (in vitro).

Its subcellular location is the secreted. It localises to the cytoplasmic vesicle. It is found in the secretory vesicle. Its function is as follows. Host-defense peptide that maintains sterility in the urogenital system. Has antimicrobial activity against a wide range of bacteria, including Gram-negative E.coli, P.aeruginosa and S.typhimurium, and Gram-positive E.aerogenes, S.aureus, B.cereus, E.faecium and L.monocytogenes. Confers resistance to intestinal infection by S.typhimurium. Exhibits antimicrobial activity against enteric commensal bacteria such as B.adolescentis, L.acidophilus, B.breve, L.fermentum, B.longum and S.thermophilus. Binds to bacterial membranes and causes membrane disintegration. Induces the secretion of the chemokine IL-8 by intestinal epithelial cells. Binds to B.antracis lef/lethal factor, a major virulence factor from B.anthracis, and neutralizes its enzymatic activity. This chain is Defensin alpha 5 (DEFA5), found in Pan troglodytes (Chimpanzee).